The sequence spans 175 residues: Peptide deformylase (175 aa).

Residues Cys-96 and His-138 each coordinate Fe cation. Glu-139 is an active-site residue. His-142 is a binding site for Fe cation.

It belongs to the polypeptide deformylase family. The cofactor is Fe(2+).

It carries out the reaction N-terminal N-formyl-L-methionyl-[peptide] + H2O = N-terminal L-methionyl-[peptide] + formate. Its function is as follows. Removes the formyl group from the N-terminal Met of newly synthesized proteins. Requires at least a dipeptide for an efficient rate of reaction. N-terminal L-methionine is a prerequisite for activity but the enzyme has broad specificity at other positions. The polypeptide is Peptide deformylase (Helicobacter acinonychis (strain Sheeba)).